A 72-amino-acid polypeptide reads, in one-letter code: Inner membrane protein YmgF (72 aa).

The Cytoplasmic segment spans residues 1–9 (MNNSNNLDY). The helical transmembrane segment at 10–30 (FTLYIIFSIAFMLITLLVILI) threads the bilayer. The Periplasmic portion of the chain corresponds to 31 to 34 (AKPS). The helical transmembrane segment at 35–55 (TGLGEVLVTINLLNALVWLAI) threads the bilayer. The Cytoplasmic portion of the chain corresponds to 56–72 (NLVNRLRERLVNHRDQQ).

In terms of assembly, interacts with FtsL, FtsQ, FtsI, FtsN, and probably many other cell division proteins.

It localises to the cell inner membrane. Functionally, could be involved in cell division. May participate in the stabilization of the cell divisome under specific conditions. The chain is Inner membrane protein YmgF (ymgF) from Escherichia coli (strain K12).